Consider the following 343-residue polypeptide: N(4)-bis(aminopropyl)spermidine synthase (343 aa).

This sequence belongs to the branched-chain polyamine synthase family.

The protein resides in the cytoplasm. The catalysed reaction is 2 S-adenosyl 3-(methylsulfanyl)propylamine + spermidine = N(4)-bis(aminopropyl)spermidine + 2 S-methyl-5'-thioadenosine + 2 H(+). The protein operates within amine and polyamine biosynthesis. In terms of biological role, involved in the biosynthesis of branched-chain polyamines, which support the growth of thermophiles under high-temperature conditions. Catalyzes the sequential condensation of spermidine with the aminopropyl groups of decarboxylated S-adenosylmethionines to produce N(4)-bis(aminopropyl)spermidine via N(4)-aminopropylspermidine. The chain is N(4)-bis(aminopropyl)spermidine synthase from Thermus thermophilus.